The following is a 202-amino-acid chain: Adenylyl-sulfate kinase (202 aa).

31 to 38 (GLSASGKS) contributes to the ATP binding site. Residue S105 is the Phosphoserine intermediate of the active site.

This sequence belongs to the APS kinase family.

It carries out the reaction adenosine 5'-phosphosulfate + ATP = 3'-phosphoadenylyl sulfate + ADP + H(+). It participates in sulfur metabolism; hydrogen sulfide biosynthesis; sulfite from sulfate: step 2/3. Catalyzes the synthesis of activated sulfate. The protein is Adenylyl-sulfate kinase (MET14) of Saccharomyces cerevisiae (strain ATCC 204508 / S288c) (Baker's yeast).